Consider the following 152-residue polypeptide: uncharacterized protein (152 aa).

It belongs to the transposase 8 family.

This is an uncharacterized protein from Sinorhizobium fredii (strain NBRC 101917 / NGR234).